The primary structure comprises 1981 residues: Nonribosomal peptide synthetase rstn8 (1981 aa).

The adenylation stretch occupies residues 251–638 (SYAALEQESA…ELGEIEYQAS (388 aa)). A Carrier 1 domain is found at 763–840 (HHAGQKYDEM…ELFHRSQKTP (78 aa)). Serine 800 is modified (O-(pantetheine 4'-phosphoryl)serine). Positions 883–1293 (EDIYPCSPLQ…DASMGTILSQ (411 aa)) are condensation 1. The region spanning 1438-1514 (EPLLPLEATL…CLASTLNSRP (77 aa)) is the Carrier 2 domain. At serine 1475 the chain carries O-(pantetheine 4'-phosphoryl)serine. The condensation 1 stretch occupies residues 1586–1978 (EEQIDLVSFA…TFAQSIERII (393 aa)). Residues 1754–1774 (HHHHQHEGRQHHGASETNGNR) are disordered.

Belongs to the NRP synthetase family. The cofactor is pantetheine 4'-phosphate.

The catalysed reaction is 2 L-tryptophan = cyclo(L-Trp-L-Trp) + 2 H2O. It participates in alkaloid biosynthesis. Functionally, nonribosomal peptide synthetase; part of the gene cluster that mediates the biosynthesis of okaramine B, a prenylated indole alkaloid that possesses an unusual octacyclic ring system, including a four-membered azetidine ring and an eight-membered azocine ring, and that exhibits insecticidal activity against silkworm larvae. Within the pathway, okaA acts as a bimodular non-ribosomal peptide synthetase (NRPS) that condenses two tryptophan molecules into cyclo(L-Trp-L-Trp). Prenylation by the prenyltransferase okaC then leads to the formation of cyclo(N8-(alpha,alpha-dimethylallyl)-L-Trp-6a-(alpha,alpha-dime-thylallyl)-L-Trp). This is followed by indole 2,3-epoxidation by the FAD-dependent monooxygenase okaB to facilitate the formation of the hexahydropyrrolo[2,3-b]indole (HPI) moiety of okaramine C. The cytochrome P450 monooxygenase okaD then likely catalyzes formation of the eight-membered ring of okaramine A. The dioxygenase okaE further forms the unusual 2-dimethyl-3-methyl-azetidine ring to yield 12-deshydroxyl okaramine E, as well as the hydroxylation of 12-deshydroxyl okaramine E to produce okaramine E. The cytochrome P450 monoxygenase okaG converts 12-deshydroxyl okaramine E into 3-desmethyl okaramine B which is further methylated by the methyltransferase okaF into okaramine B. In a shunt pathway, okaG and okaF together are also able to convert okaramine E into okaramine D. Okaramine H is produced by nonenzymatic conversion from okaramine A. In Penicillium ochrochloron, this protein is Nonribosomal peptide synthetase rstn8.